Consider the following 180-residue polypeptide: MTTQLDLIKSSIKSIPNYPKEGIIFRDITTLLEVPAAFKATIDLIVEQYRDKGITKVLGTESRGFIFGAPVALALGLPFELVRKPKKLPRETISQSYQLEYGQDTLEMHVDAISEGDNVLIIDDLLATGGTVEATVKLVQRLGGAVKHAAFVINLPELGGEKRLNNLGVDCYTLVNFEGH.

Belongs to the purine/pyrimidine phosphoribosyltransferase family. In terms of assembly, homodimer.

It localises to the cytoplasm. The enzyme catalyses AMP + diphosphate = 5-phospho-alpha-D-ribose 1-diphosphate + adenine. Its pathway is purine metabolism; AMP biosynthesis via salvage pathway; AMP from adenine: step 1/1. Catalyzes a salvage reaction resulting in the formation of AMP, that is energically less costly than de novo synthesis. The sequence is that of Adenine phosphoribosyltransferase from Haemophilus influenzae (strain 86-028NP).